Reading from the N-terminus, the 82-residue chain is Small ribosomal subunit protein bS20 (82 aa).

It belongs to the bacterial ribosomal protein bS20 family.

Its function is as follows. Binds directly to 16S ribosomal RNA. The sequence is that of Small ribosomal subunit protein bS20 from Streptococcus suis (strain 98HAH33).